The following is a 358-amino-acid chain: Fructose-bisphosphate aldolase 7, cytosolic (358 aa).

At Ser-2 the chain carries N-acetylserine. Residue Arg-52 coordinates substrate. Cys-68 is subject to S-glutathionyl cysteine; transient. Lys-142 contacts substrate. Cys-173 carries the post-translational modification S-glutathionyl cysteine; transient; alternate. Cys-173 is subject to S-nitrosocysteine; transient; alternate. Glu-183 serves as the catalytic Proton acceptor. The active-site Schiff-base intermediate with dihydroxyacetone-P is Lys-225. Residue 266–268 (SGI) coordinates substrate.

It belongs to the class I fructose-bisphosphate aldolase family. Homotetramer. Post-translationally, S-glutathionylated at Cys-68 and Cys-173. S-nitrosylated at Cys-173. As to expression, highly expressed in flowers, and at lower levels in rosettes leaves and cauline leaves.

The protein localises to the cytoplasm. It localises to the cytosol. The enzyme catalyses beta-D-fructose 1,6-bisphosphate = D-glyceraldehyde 3-phosphate + dihydroxyacetone phosphate. It participates in carbohydrate degradation; glycolysis; D-glyceraldehyde 3-phosphate and glycerone phosphate from D-glucose: step 4/4. Plays a key role in glycolysis and gluconeogenesis. This chain is Fructose-bisphosphate aldolase 7, cytosolic, found in Arabidopsis thaliana (Mouse-ear cress).